Consider the following 240-residue polypeptide: MKMMDANEIIQFISNSQKTTPVKVYIKGDLEGIDFGANTKSFINGQTGVLFGEWSEIDAALKANEAKIKDVVVENDRRNSAIPLLDLKNIKARIEPGAIIRDQVEIGDNAVIMMGASINIGSVIGEGTMIDMNVVLGGRATVGKNCHIGAGSVLAGVIEPPSAKPVVVEDDVVIGANCVILEGVTVGKGAVVAAGAVVTEDVPPNTVVAGTPARVIKEIDEKTKGKTEIKQELRRLNEDN.

The protein belongs to the transferase hexapeptide repeat family. DapH subfamily.

It catalyses the reaction (S)-2,3,4,5-tetrahydrodipicolinate + acetyl-CoA + H2O = L-2-acetamido-6-oxoheptanedioate + CoA. Its pathway is amino-acid biosynthesis; L-lysine biosynthesis via DAP pathway; LL-2,6-diaminopimelate from (S)-tetrahydrodipicolinate (acetylase route): step 1/3. Catalyzes the transfer of an acetyl group from acetyl-CoA to tetrahydrodipicolinate. The chain is 2,3,4,5-tetrahydropyridine-2,6-dicarboxylate N-acetyltransferase from Halalkalibacterium halodurans (strain ATCC BAA-125 / DSM 18197 / FERM 7344 / JCM 9153 / C-125) (Bacillus halodurans).